The sequence spans 613 residues: Dihydroxy-acid dehydratase (613 aa).

A Mg(2+)-binding site is contributed by D81. Residue C122 coordinates [2Fe-2S] cluster. 2 residues coordinate Mg(2+): D123 and K124. The residue at position 124 (K124) is an N6-carboxylysine. C195 serves as a coordination point for [2Fe-2S] cluster. Position 491 (E491) interacts with Mg(2+). S517 acts as the Proton acceptor in catalysis.

This sequence belongs to the IlvD/Edd family. Homodimer. [2Fe-2S] cluster is required as a cofactor. Requires Mg(2+) as cofactor.

The catalysed reaction is (2R)-2,3-dihydroxy-3-methylbutanoate = 3-methyl-2-oxobutanoate + H2O. The enzyme catalyses (2R,3R)-2,3-dihydroxy-3-methylpentanoate = (S)-3-methyl-2-oxopentanoate + H2O. Its pathway is amino-acid biosynthesis; L-isoleucine biosynthesis; L-isoleucine from 2-oxobutanoate: step 3/4. It participates in amino-acid biosynthesis; L-valine biosynthesis; L-valine from pyruvate: step 3/4. In terms of biological role, functions in the biosynthesis of branched-chain amino acids. Catalyzes the dehydration of (2R,3R)-2,3-dihydroxy-3-methylpentanoate (2,3-dihydroxy-3-methylvalerate) into 2-oxo-3-methylpentanoate (2-oxo-3-methylvalerate) and of (2R)-2,3-dihydroxy-3-methylbutanoate (2,3-dihydroxyisovalerate) into 2-oxo-3-methylbutanoate (2-oxoisovalerate), the penultimate precursor to L-isoleucine and L-valine, respectively. In Aeromonas hydrophila subsp. hydrophila (strain ATCC 7966 / DSM 30187 / BCRC 13018 / CCUG 14551 / JCM 1027 / KCTC 2358 / NCIMB 9240 / NCTC 8049), this protein is Dihydroxy-acid dehydratase.